The following is a 273-amino-acid chain: Large ribosomal subunit protein uL2 (273 aa).

Positions 221–262 (RGTAMNPVDHPHGGGEGRNFGKHPVTPWGVQTKGKKTRHNKR) are disordered. The span at 253–262 (KGKKTRHNKR) shows a compositional bias: basic residues.

This sequence belongs to the universal ribosomal protein uL2 family. As to quaternary structure, part of the 50S ribosomal subunit. Forms a bridge to the 30S subunit in the 70S ribosome.

One of the primary rRNA binding proteins. Required for association of the 30S and 50S subunits to form the 70S ribosome, for tRNA binding and peptide bond formation. It has been suggested to have peptidyltransferase activity; this is somewhat controversial. Makes several contacts with the 16S rRNA in the 70S ribosome. The polypeptide is Large ribosomal subunit protein uL2 (Haemophilus ducreyi (strain 35000HP / ATCC 700724)).